The primary structure comprises 283 residues: Cyclin-C (283 aa).

In terms of domain architecture, Cyclin N-terminal spans 46 to 144; it reads NVIQALGEHL…ILECEFYLLE (99 aa). Residues 252–283 form a disordered region; it reads SILSKMPKPKPPPNSDGEQGTNGSQSSGYSQS. Residues 267–283 are compositionally biased toward polar residues; the sequence is DGEQGTNGSQSSGYSQS.

The protein belongs to the cyclin family. Cyclin C subfamily. Component of the Mediator complex. The cylin/CDK pair formed by ccnc/cdk8 also associates with the large subunit of RNA polymerase II.

It is found in the nucleus. Component of the Mediator complex, a coactivator involved in regulated gene transcription of nearly all RNA polymerase II-dependent genes. Mediator functions as a bridge to convey information from gene-specific regulatory proteins to the basal RNA polymerase II transcription machinery. Mediator is recruited to promoters by direct interactions with regulatory proteins and serves as a scaffold for the assembly of a functional preinitiation complex with RNA polymerase II and the general transcription factors. Binds to and activates cyclin-dependent kinase cdk8 that phosphorylates the CTD (C-terminal domain) of the large subunit of RNA polymerase II (RNAp II), which may inhibit the formation of a transcription initiation complex. This Xenopus laevis (African clawed frog) protein is Cyclin-C (ccnc).